Here is a 418-residue protein sequence, read N- to C-terminus: 3-phosphoshikimate 1-carboxyvinyltransferase (418 aa).

3-phosphoshikimate contacts are provided by Lys-26, Ser-27, and Arg-31. Lys-26 contributes to the phosphoenolpyruvate binding site. Positions 97 and 125 each coordinate phosphoenolpyruvate. Positions 170, 171, 172, 297, 320, and 324 each coordinate 3-phosphoshikimate. Residue Gln-172 participates in phosphoenolpyruvate binding. Asp-297 (proton acceptor) is an active-site residue. 3 residues coordinate phosphoenolpyruvate: Arg-328, Arg-375, and Lys-400.

The protein belongs to the EPSP synthase family. As to quaternary structure, monomer.

The protein resides in the cytoplasm. The enzyme catalyses 3-phosphoshikimate + phosphoenolpyruvate = 5-O-(1-carboxyvinyl)-3-phosphoshikimate + phosphate. Its pathway is metabolic intermediate biosynthesis; chorismate biosynthesis; chorismate from D-erythrose 4-phosphate and phosphoenolpyruvate: step 6/7. Its function is as follows. Catalyzes the transfer of the enolpyruvyl moiety of phosphoenolpyruvate (PEP) to the 5-hydroxyl of shikimate-3-phosphate (S3P) to produce enolpyruvyl shikimate-3-phosphate and inorganic phosphate. The sequence is that of 3-phosphoshikimate 1-carboxyvinyltransferase from Pseudomonas syringae pv. tomato (strain ATCC BAA-871 / DC3000).